The sequence spans 308 residues: Baculoviral IAP repeat-containing protein bir-2 (308 aa).

2 BIR repeats span residues 27 to 98 (RFAS…EFVM) and 170 to 241 (RLAT…DFIK). 8 residues coordinate Zn(2+): Cys68, Cys71, His87, Cys94, Cys211, Cys214, His230, and Cys237.

This sequence belongs to the IAP family.

The chain is Baculoviral IAP repeat-containing protein bir-2 from Caenorhabditis elegans.